The following is a 100-amino-acid chain: Urease subunit gamma (100 aa).

Belongs to the urease gamma subunit family. As to quaternary structure, heterotrimer of UreA (gamma), UreB (beta) and UreC (alpha) subunits. Three heterotrimers associate to form the active enzyme.

It localises to the cytoplasm. It carries out the reaction urea + 2 H2O + H(+) = hydrogencarbonate + 2 NH4(+). Its pathway is nitrogen metabolism; urea degradation; CO(2) and NH(3) from urea (urease route): step 1/1. The polypeptide is Urease subunit gamma (Synechococcus sp. (strain WH7805)).